Here is a 236-residue protein sequence, read N- to C-terminus: Urease accessory protein UreG 2 (236 aa).

Residues 1 to 40 (MEASVHIGNSVPHAHLHSAAPARPADPVRPDGSRRALRIG) are disordered. 43-50 (GPVGSGKT) provides a ligand contact to GTP.

The protein belongs to the SIMIBI class G3E GTPase family. UreG subfamily. Homodimer. UreD, UreF and UreG form a complex that acts as a GTP-hydrolysis-dependent molecular chaperone, activating the urease apoprotein by helping to assemble the nickel containing metallocenter of UreC. The UreE protein probably delivers the nickel.

It is found in the cytoplasm. Functionally, facilitates the functional incorporation of the urease nickel metallocenter. This process requires GTP hydrolysis, probably effectuated by UreG. The polypeptide is Urease accessory protein UreG 2 (Saccharopolyspora erythraea (strain ATCC 11635 / DSM 40517 / JCM 4748 / NBRC 13426 / NCIMB 8594 / NRRL 2338)).